We begin with the raw amino-acid sequence, 571 residues long: Dual specificity testis-specific protein kinase 2 (571 aa).

A Protein kinase domain is found at 58–313; that stretch reads DFTCEKIGSG…EIGKTLEEIL (256 aa). Residues 64 to 72 and Lys87 each bind ATP; that span reads IGSGFFSEV. The active-site Proton acceptor is Asp176. Ser219 is subject to Phosphoserine; by autocatalysis. Phosphoserine occurs at positions 369, 456, and 460. The segment at 521–571 is disordered; that stretch reads ENGFGSRPQGTSPCPAGASEEMEVEERPAGSTPATFSTSGIGLQTQGKQDG. The segment covering 552 to 571 has biased composition (polar residues); sequence TPATFSTSGIGLQTQGKQDG.

It belongs to the protein kinase superfamily. TKL Ser/Thr protein kinase family. Requires Mg(2+) as cofactor. It depends on Mn(2+) as a cofactor. Predominantly expressed in testis and prostate. Found predominantly in non-germinal Sertoli cells.

It is found in the nucleus. The catalysed reaction is L-seryl-[protein] + ATP = O-phospho-L-seryl-[protein] + ADP + H(+). It catalyses the reaction L-threonyl-[protein] + ATP = O-phospho-L-threonyl-[protein] + ADP + H(+). It carries out the reaction L-tyrosyl-[protein] + ATP = O-phospho-L-tyrosyl-[protein] + ADP + H(+). With respect to regulation, activated by autophosphorylation on Ser-219. Functionally, dual specificity protein kinase activity catalyzing autophosphorylation and phosphorylation of exogenous substrates on both serine/threonine and tyrosine residues. Phosphorylates cofilin at 'Ser-3'. May play an important role in spermatogenesis. In Homo sapiens (Human), this protein is Dual specificity testis-specific protein kinase 2 (TESK2).